Reading from the N-terminus, the 118-residue chain is Large ribosomal subunit protein uL22 (118 aa).

It belongs to the universal ribosomal protein uL22 family. As to quaternary structure, part of the 50S ribosomal subunit.

Functionally, this protein binds specifically to 23S rRNA; its binding is stimulated by other ribosomal proteins, e.g. L4, L17, and L20. It is important during the early stages of 50S assembly. It makes multiple contacts with different domains of the 23S rRNA in the assembled 50S subunit and ribosome. Its function is as follows. The globular domain of the protein is located near the polypeptide exit tunnel on the outside of the subunit, while an extended beta-hairpin is found that lines the wall of the exit tunnel in the center of the 70S ribosome. The polypeptide is Large ribosomal subunit protein uL22 (Prosthecochloris aestuarii (strain DSM 271 / SK 413)).